The following is a 131-amino-acid chain: Phosphoribosyl-AMP cyclohydrolase (131 aa).

Residue aspartate 78 participates in Mg(2+) binding. Cysteine 79 is a binding site for Zn(2+). Aspartate 80 and aspartate 82 together coordinate Mg(2+). Residues cysteine 96 and cysteine 103 each contribute to the Zn(2+) site.

Belongs to the PRA-CH family. In terms of assembly, homodimer. The cofactor is Mg(2+). Zn(2+) serves as cofactor.

The protein localises to the cytoplasm. It catalyses the reaction 1-(5-phospho-beta-D-ribosyl)-5'-AMP + H2O = 1-(5-phospho-beta-D-ribosyl)-5-[(5-phospho-beta-D-ribosylamino)methylideneamino]imidazole-4-carboxamide. Its pathway is amino-acid biosynthesis; L-histidine biosynthesis; L-histidine from 5-phospho-alpha-D-ribose 1-diphosphate: step 3/9. In terms of biological role, catalyzes the hydrolysis of the adenine ring of phosphoribosyl-AMP. This is Phosphoribosyl-AMP cyclohydrolase from Neisseria meningitidis serogroup A / serotype 4A (strain DSM 15465 / Z2491).